Here is a 443-residue protein sequence, read N- to C-terminus: Pyrrolysine--tRNA ligase (443 aa).

The disordered stretch occupies residues 103-177 (VRKAMPKSVA…PAAPVPTSAP (75 aa)). Over residues 131 to 177 (PAPATPVSAPAQAPAPSTGSASATSASAQRMANSAAAPAAPVPTSAP) the composition is skewed to low complexity.

Belongs to the class-II aminoacyl-tRNA synthetase family.

Its subcellular location is the cytoplasm. The enzyme catalyses tRNA(Pyl) + L-pyrrolysine + ATP = L-pyrrolysyl-tRNA(Pyl) + AMP + diphosphate. Its function is as follows. Catalyzes the attachment of pyrrolysine to tRNA(Pyl). Pyrrolysine is a lysine derivative encoded by the termination codon UAG. In Methanosarcina acetivorans (strain ATCC 35395 / DSM 2834 / JCM 12185 / C2A), this protein is Pyrrolysine--tRNA ligase.